A 368-amino-acid polypeptide reads, in one-letter code: Phospho-N-acetylmuramoyl-pentapeptide-transferase (368 aa).

Helical transmembrane passes span 31–51, 73–93, 98–118, 134–154, 175–195, 213–233, 249–269, 271–291, 296–316, and 345–365; these read LTSMLVTFWFGHKIIDFLYGL, TMGGLLIIGSLLISVLLWGNL, VILLSVFSLSFSVLGFADDYM, FILSILISFIFCILFFYYTGT, GPVIALGIIAIPFSILVIIGS, VLISVMTLGVIAYFSGTPIVA, VFLSALTGALFGFLWFNAHPA, VFMGDTGSLFLGATLGMIVIL, ILLLILGAIFVSEALSVILQV, and KIVIRFWIIAVILAIISLSTL.

This sequence belongs to the glycosyltransferase 4 family. MraY subfamily. Requires Mg(2+) as cofactor.

Its subcellular location is the cell inner membrane. It catalyses the reaction UDP-N-acetyl-alpha-D-muramoyl-L-alanyl-gamma-D-glutamyl-meso-2,6-diaminopimeloyl-D-alanyl-D-alanine + di-trans,octa-cis-undecaprenyl phosphate = di-trans,octa-cis-undecaprenyl diphospho-N-acetyl-alpha-D-muramoyl-L-alanyl-D-glutamyl-meso-2,6-diaminopimeloyl-D-alanyl-D-alanine + UMP. It participates in cell wall biogenesis; peptidoglycan biosynthesis. Functionally, catalyzes the initial step of the lipid cycle reactions in the biosynthesis of the cell wall peptidoglycan: transfers peptidoglycan precursor phospho-MurNAc-pentapeptide from UDP-MurNAc-pentapeptide onto the lipid carrier undecaprenyl phosphate, yielding undecaprenyl-pyrophosphoryl-MurNAc-pentapeptide, known as lipid I. This is Phospho-N-acetylmuramoyl-pentapeptide-transferase from Leptospira interrogans serogroup Icterohaemorrhagiae serovar copenhageni (strain Fiocruz L1-130).